We begin with the raw amino-acid sequence, 1132 residues long: Tip attachment protein J (1132 aa).

Fibronectin type-III domains follow at residues 618 to 711 (PPAV…SFRI) and 712 to 807 (AAPA…VGRA). Residues 883–1132 (SMEDTEEGKL…KKQALGISVV (250 aa)) form an interaction with host LamB region.

Belongs to the Caudoviricetes tip attachment protein J family. As to quaternary structure, interacts with host LamB.

It is found in the virion. Its subcellular location is the host cytoplasm. Functionally, attaches the virion to the host receptor LamB, inducing viral DNA ejection. During tail assembly, initiates distal tail tip assembly by interacting with gpI, gpL and gpK. During virus entry to host cell, binds strongly to host LamB in an irreversible attachment. The binding induces structural changes in the tail leading to viral DNA injection through LamB trimeric pore. This chain is Tip attachment protein J (J), found in Escherichia coli (Bacteriophage lambda).